Consider the following 409-residue polypeptide: Peptidase T (409 aa).

Residue His-78 participates in Zn(2+) binding. The active site involves Asp-80. Asp-140 provides a ligand contact to Zn(2+). The active-site Proton acceptor is the Glu-173. The Zn(2+) site is built by Glu-174, Asp-196, and His-379.

This sequence belongs to the peptidase M20B family. Requires Zn(2+) as cofactor.

The protein resides in the cytoplasm. It carries out the reaction Release of the N-terminal residue from a tripeptide.. In terms of biological role, cleaves the N-terminal amino acid of tripeptides. The protein is Peptidase T of Salmonella agona (strain SL483).